Reading from the N-terminus, the 216-residue chain is Cytidylate kinase (216 aa).

11–19 lines the ATP pocket; that stretch reads GPAGAGKGT.

The protein belongs to the cytidylate kinase family. Type 1 subfamily.

The protein resides in the cytoplasm. The catalysed reaction is CMP + ATP = CDP + ADP. The enzyme catalyses dCMP + ATP = dCDP + ADP. The polypeptide is Cytidylate kinase (Mesorhizobium japonicum (strain LMG 29417 / CECT 9101 / MAFF 303099) (Mesorhizobium loti (strain MAFF 303099))).